Here is a 185-residue protein sequence, read N- to C-terminus: Elongation factor P (185 aa).

This sequence belongs to the elongation factor P family.

Its subcellular location is the cytoplasm. The protein operates within protein biosynthesis; polypeptide chain elongation. Functionally, involved in peptide bond synthesis. Stimulates efficient translation and peptide-bond synthesis on native or reconstituted 70S ribosomes in vitro. Probably functions indirectly by altering the affinity of the ribosome for aminoacyl-tRNA, thus increasing their reactivity as acceptors for peptidyl transferase. This Agathobacter rectalis (strain ATCC 33656 / DSM 3377 / JCM 17463 / KCTC 5835 / VPI 0990) (Eubacterium rectale) protein is Elongation factor P.